Consider the following 217-residue polypeptide: 2-phospho-L-lactate guanylyltransferase (217 aa).

It belongs to the CofC family. As to quaternary structure, homodimer.

It carries out the reaction (2S)-2-phospholactate + GTP + H(+) = (2S)-lactyl-2-diphospho-5'-guanosine + diphosphate. Its pathway is cofactor biosynthesis; coenzyme F420 biosynthesis. Its function is as follows. Guanylyltransferase that catalyzes the activation of (2S)-2-phospholactate (2-PL) as (2S)-lactyl-2-diphospho-5'-guanosine, via the condensation of 2-PL with GTP. It is involved in the biosynthesis of coenzyme F420, a hydride carrier cofactor. The protein is 2-phospho-L-lactate guanylyltransferase of Halorubrum lacusprofundi (strain ATCC 49239 / DSM 5036 / JCM 8891 / ACAM 34).